Consider the following 144-residue polypeptide: Large ribosomal subunit protein uL11 (144 aa).

It belongs to the universal ribosomal protein uL11 family. Part of the ribosomal stalk of the 50S ribosomal subunit. Interacts with L10 and the large rRNA to form the base of the stalk. L10 forms an elongated spine to which L12 dimers bind in a sequential fashion forming a multimeric L10(L12)X complex. Post-translationally, one or more lysine residues are methylated.

In terms of biological role, forms part of the ribosomal stalk which helps the ribosome interact with GTP-bound translation factors. This is Large ribosomal subunit protein uL11 from Parafrankia sp. (strain EAN1pec).